The sequence spans 149 residues: Hut operon positive regulatory protein (149 aa).

This sequence belongs to the HutP family. As to quaternary structure, homohexamer.

Functionally, antiterminator that binds to cis-acting regulatory sequences on the mRNA in the presence of histidine, thereby suppressing transcription termination and activating the hut operon for histidine utilization. This Geobacillus sp. (strain WCH70) protein is Hut operon positive regulatory protein.